The sequence spans 130 residues: uncharacterized protein (130 aa).

Positions 76 to 102 (RKCKNGPSPNKRGSASGCSRRGGGRGS) are disordered.

This is an uncharacterized protein from Saccharomyces cerevisiae (strain ATCC 204508 / S288c) (Baker's yeast).